The chain runs to 321 residues: MESNGVPMITLSSGIRMPALGMGTAETMVKGTEREKLAFLKAIEVGYRHFDTAAAYQSEECLGEAIAEALQLGLIKSRDELFITSKLWCADAHADLVLPALQNSLRNLKLDYLDLYLIHHPVSLKPGKFVNEIPKDHILPMDYKSVWAAMEECQTLGFTRAIGVCNFSCKRLQELMETANSPPVVNQVEMSPTLHQKNLREYCKANNIMITAHSVLGAVGAAWGTNAVMHSKVLHQIAVARGKSVAQVSMRWVYQQGASLVVKSFNEARMKENLKIFDWELTAEDMEKISEIPQSRTSSAAFLLSPTGPFKTEEEFWDEKD.

Positions 27 and 51 each coordinate NADPH. Active-site proton donor residues include tyrosine 56 and histidine 119. Histidine 119 contacts substrate. Residues glutamine 187, serine 214, leucine 216, serine 264, and arginine 269 each contribute to the NADPH site.

It belongs to the aldo/keto reductase family. As to expression, latex secreting cells (laticifer cells). Expressed constitutively and ubiquitously with highest levels in capsules. Restricted to the parietal region of sieve elements adjacent or proximal to laticifers in roots, stems, leaves and carpels.

The protein resides in the cytoplasm. It is found in the cytosol. The catalysed reaction is codeine + NADP(+) = codeinone + NADPH + H(+). It catalyses the reaction neopine + NADP(+) = neopinone + NADPH + H(+). The enzyme catalyses morphine + NADP(+) = morphinone + NADPH + H(+). It carries out the reaction neomorphine + NADP(+) = neomorphinone + NADPH + H(+). Its pathway is alkaloid biosynthesis; morphine biosynthesis. Its function is as follows. NADPH-dependent reductase involved in biosynthesis of morphinan-type benzylisoquinoline and opiate alkaloids natural products. Reduces codeinone to codeine in the penultimate step in morphine biosynthesis. Can use morphinone, hydrocodone and hydromorphone as substrate during reductive reaction with NADPH as cofactor, and morphine and dihydrocodeine as substrate during oxidative reaction with NADP as cofactor. Converts morphinone to morphine, and neomorphinone to neomorphine. Reduces irreversibly neopinone, a spontaneous isomer of codeinone, to neopine; in planta, neopine levels are limited to low levels. The protein is NADPH-dependent codeinone reductase 1-1 of Papaver somniferum (Opium poppy).